Here is a 272-residue protein sequence, read N- to C-terminus: Energy-coupling factor transporter ATP-binding protein EcfA1 (272 aa).

Residues I2–D237 enclose the ABC transporter domain. G37–S44 lines the ATP pocket.

It belongs to the ABC transporter superfamily. Energy-coupling factor EcfA family. Forms a stable energy-coupling factor (ECF) transporter complex composed of 2 membrane-embedded substrate-binding proteins (S component), 2 ATP-binding proteins (A component) and 2 transmembrane proteins (T component).

The protein resides in the cell membrane. In terms of biological role, ATP-binding (A) component of a common energy-coupling factor (ECF) ABC-transporter complex. Unlike classic ABC transporters this ECF transporter provides the energy necessary to transport a number of different substrates. The sequence is that of Energy-coupling factor transporter ATP-binding protein EcfA1 from Mesomycoplasma hyopneumoniae (strain 7448) (Mycoplasma hyopneumoniae).